The following is a 410-amino-acid chain: MATHVAIIGNGVAGFTTAQALRAEGFEGRISLIGNEPHLPYDRPSLSKAVLGGSLEHPPVLAEADWYGEARIDMLSGRSVTNLNVDARTISLDDGSTFAADAIVIATGSRARTLALPGSQLTGVVTLRTNDDVRPLCRGWTPATRLVIAGGGLIGCEVATTARKLGLAVTILESADELLVRVLGRRIGAWLRGLLTELGVRVELGTGVAGFSGDDRLEEVLASDGRRFAADNALVCIGAEPEDQLARQAGLSCDRGVIVDDHGATHAEGVFAVGDAASWPLRDGGRRSLETYMNAQRQAAAVAAAILGKHGSAPQVPVSWTEIAGHRMQMAGDIEGPGEFVLRGTLGDGAALLFRLRDGRIQAVVAVDAPRDFAMAARLVEARAAIEPARLADFSNSMRDLVRAQQGDSA.

4 to 35 (HVAIIGNGVAGFTTAQALRAEGFEGRISLIGN) serves as a coordination point for FAD. 145-173 (RLVIAGGGLIGCEVATTARKLGLAVTILE) contacts NAD(+).

The protein belongs to the bacterial ring-hydroxylating dioxygenase ferredoxin reductase family. As to quaternary structure, this dioxygenase system consists of four proteins: the two subunits of the oxygenase component (TecA1 and TecA2), a ferredoxin (TecA3) and a ferredoxin reductase (TecA4). FAD serves as cofactor.

The catalysed reaction is 2 reduced [2Fe-2S]-[ferredoxin] + NAD(+) + H(+) = 2 oxidized [2Fe-2S]-[ferredoxin] + NADH. Its pathway is aromatic compound metabolism. In terms of biological role, part of the chlorobenzene dioxygenase system that catalyzes the dihydroxylation of a range of aromatic compounds, including chlorinated benzenes and toluenes, and dinuclear aromatics such as biphenyl and dibenzo-p-dioxin. The chain is Chlorobenzene dioxygenase, ferredoxin reductase component from Cupriavidus sp. (strain PS12).